A 783-amino-acid chain; its full sequence is Endonuclease MutS2 (783 aa).

328 to 335 (GPNTGGKT) is a binding site for ATP. The Smr domain occupies 708–783 (LDLRGKRYEE…GSGCTIATLG (76 aa)).

The protein belongs to the DNA mismatch repair MutS family. MutS2 subfamily. As to quaternary structure, homodimer. Binds to stalled ribosomes, contacting rRNA.

Its function is as follows. Endonuclease that is involved in the suppression of homologous recombination and thus may have a key role in the control of bacterial genetic diversity. Functionally, acts as a ribosome collision sensor, splitting the ribosome into its 2 subunits. Detects stalled/collided 70S ribosomes which it binds and splits by an ATP-hydrolysis driven conformational change. Acts upstream of the ribosome quality control system (RQC), a ribosome-associated complex that mediates the extraction of incompletely synthesized nascent chains from stalled ribosomes and their subsequent degradation. Probably generates substrates for RQC. This chain is Endonuclease MutS2, found in Streptococcus thermophilus (strain CNRZ 1066).